The primary structure comprises 249 residues: MVDRLANSEANTRRISIVESCFGAAGQPLTIPGRVLIGEGVLTKLCRKKPKARQFFLFNDILVYGNIVIQKKKYNKQHIIPLENVTIDSIKDEGELRNGWLIKTPTKSFAVYAATATEKSEWMNHINKCVTDLLSKSGKTPSNEHAAVWVPDSEATVCMRCQKAKFTPVNRRHHCRKCGFVVCGPCSEKRFLLPSQSSKPVRICDFCYDLLSTGDMAACQPTRSDSYSQSLKSPLNDASDDDDDDDSSD.

Ser16 is modified (phosphoserine). The 97-residue stretch at 35–131 (VLIGEGVLTK…WMNHINKCVT (97 aa)) folds into the PH domain. Lys44 carries the N6-acetyllysine modification. Residues 152–212 (DSEATVCMRC…ICDFCYDLLS (61 aa)) form an FYVE-type zinc finger. Zn(2+) contacts are provided by Cys158, Cys161, Cys175, Cys178, Cys183, Cys186, Cys204, and Cys207. The span at 221–233 (PTRSDSYSQSLKS) shows a compositional bias: polar residues. Residues 221-249 (PTRSDSYSQSLKSPLNDASDDDDDDDSSD) are disordered. Acidic residues predominate over residues 238 to 249 (ASDDDDDDDSSD). Phosphoserine is present on residues Ser239 and Ser248.

As to quaternary structure, may interact with EEA1. In terms of tissue distribution, expressed in brain, stomach and thymus, as well as in kidney, spleen, and skeletal muscle. Also expressed in peripheral blood mononuclear cells and dendritic cells.

It is found in the early endosome membrane. The protein localises to the endoplasmic reticulum. In terms of biological role, may play a role in early endosome fusion upstream of RAB5, hence regulating receptor trafficking and fluid-phase transport. Enhances cellular sensitivity to TNF-induced apoptosis. The chain is Pleckstrin homology domain-containing family F member 2 (Plekhf2) from Mus musculus (Mouse).